We begin with the raw amino-acid sequence, 379 residues long: Chaperone protein DnaJ (379 aa).

In terms of domain architecture, J spans 4-69; that stretch reads DLYETLGVQK…QKRAAYDRYG (66 aa). The segment at 137–215 adopts a CR-type zinc-finger fold; that stretch reads GKTAQIRVPT…CHGQGRVVEE (79 aa). 8 residues coordinate Zn(2+): C150, C153, C167, C170, C189, C192, C203, and C206. CXXCXGXG motif repeat units lie at residues 150 to 157, 167 to 174, 189 to 196, and 203 to 210; these read CDVCTGTG, CGTCQGTG, CPTCGGRG, and CTKCHGQG.

Belongs to the DnaJ family. In terms of assembly, homodimer. Zn(2+) is required as a cofactor.

Its subcellular location is the cytoplasm. In terms of biological role, participates actively in the response to hyperosmotic and heat shock by preventing the aggregation of stress-denatured proteins and by disaggregating proteins, also in an autonomous, DnaK-independent fashion. Unfolded proteins bind initially to DnaJ; upon interaction with the DnaJ-bound protein, DnaK hydrolyzes its bound ATP, resulting in the formation of a stable complex. GrpE releases ADP from DnaK; ATP binding to DnaK triggers the release of the substrate protein, thus completing the reaction cycle. Several rounds of ATP-dependent interactions between DnaJ, DnaK and GrpE are required for fully efficient folding. Also involved, together with DnaK and GrpE, in the DNA replication of plasmids through activation of initiation proteins. In Rhizobium meliloti (strain 1021) (Ensifer meliloti), this protein is Chaperone protein DnaJ.